Here is a 158-residue protein sequence, read N- to C-terminus: Small ribosomal subunit protein uS7 (158 aa).

It belongs to the universal ribosomal protein uS7 family. As to quaternary structure, part of the 30S ribosomal subunit. Contacts proteins S9 and S11.

One of the primary rRNA binding proteins, it binds directly to 16S rRNA where it nucleates assembly of the head domain of the 30S subunit. Is located at the subunit interface close to the decoding center, probably blocks exit of the E-site tRNA. The protein is Small ribosomal subunit protein uS7 of Gluconacetobacter diazotrophicus (strain ATCC 49037 / DSM 5601 / CCUG 37298 / CIP 103539 / LMG 7603 / PAl5).